A 225-amino-acid polypeptide reads, in one-letter code: NAD(P)H-quinone oxidoreductase subunit K, chloroplastic (225 aa).

Cysteine 43, cysteine 44, cysteine 108, and cysteine 139 together coordinate [4Fe-4S] cluster.

The protein belongs to the complex I 20 kDa subunit family. As to quaternary structure, NDH is composed of at least 16 different subunits, 5 of which are encoded in the nucleus. Requires [4Fe-4S] cluster as cofactor.

It is found in the plastid. The protein localises to the chloroplast thylakoid membrane. It catalyses the reaction a plastoquinone + NADH + (n+1) H(+)(in) = a plastoquinol + NAD(+) + n H(+)(out). The enzyme catalyses a plastoquinone + NADPH + (n+1) H(+)(in) = a plastoquinol + NADP(+) + n H(+)(out). Functionally, NDH shuttles electrons from NAD(P)H:plastoquinone, via FMN and iron-sulfur (Fe-S) centers, to quinones in the photosynthetic chain and possibly in a chloroplast respiratory chain. The immediate electron acceptor for the enzyme in this species is believed to be plastoquinone. Couples the redox reaction to proton translocation, and thus conserves the redox energy in a proton gradient. The polypeptide is NAD(P)H-quinone oxidoreductase subunit K, chloroplastic (Triticum aestivum (Wheat)).